A 45-amino-acid polypeptide reads, in one-letter code: Omega-hexatoxin-Hv2a (45 aa).

3 cysteine pairs are disulfide-bonded: Cys4–Cys18, Cys11–Cys24, and Cys17–Cys29.

It belongs to the neurotoxin 15 family. 02 (omega-actx) subfamily. As to expression, expressed by the venom gland.

Its subcellular location is the secreted. In terms of biological role, potent inhibitor of insect (bee brain), but not mammalian (rat trigeminal neurons), voltage-gated calcium channels (Cav). In vivo, injection into lone star ticks (Amblyomma americanum) induces curling of all eight legs into closed loops, followed by death. The polypeptide is Omega-hexatoxin-Hv2a (Hadronyche versuta (Blue mountains funnel-web spider)).